Here is a 117-residue protein sequence, read N- to C-terminus: Large ribosomal subunit protein uL18 (117 aa).

The protein belongs to the universal ribosomal protein uL18 family. Part of the 50S ribosomal subunit; part of the 5S rRNA/L5/L18/L25 subcomplex. Contacts the 5S and 23S rRNAs.

In terms of biological role, this is one of the proteins that bind and probably mediate the attachment of the 5S RNA into the large ribosomal subunit, where it forms part of the central protuberance. This Halorhodospira halophila (strain DSM 244 / SL1) (Ectothiorhodospira halophila (strain DSM 244 / SL1)) protein is Large ribosomal subunit protein uL18.